We begin with the raw amino-acid sequence, 193 residues long: Phosphoheptose isomerase (193 aa).

Positions 37 to 193 (IAQSFKNEKK…LIIEKEMQKN (157 aa)) constitute an SIS domain. 52-54 (NGG) lines the substrate pocket. Zn(2+) contacts are provided by His61 and Glu65. Substrate-binding positions include Glu65, 93-94 (ND), 119-121 (STS), Ser124, and Gln172. Residues Gln172 and His180 each contribute to the Zn(2+) site.

This sequence belongs to the SIS family. GmhA subfamily. As to quaternary structure, homotetramer. Requires Zn(2+) as cofactor.

The protein localises to the cytoplasm. The catalysed reaction is 2 D-sedoheptulose 7-phosphate = D-glycero-alpha-D-manno-heptose 7-phosphate + D-glycero-beta-D-manno-heptose 7-phosphate. It participates in carbohydrate biosynthesis; D-glycero-D-manno-heptose 7-phosphate biosynthesis; D-glycero-alpha-D-manno-heptose 7-phosphate and D-glycero-beta-D-manno-heptose 7-phosphate from sedoheptulose 7-phosphate: step 1/1. Catalyzes the isomerization of sedoheptulose 7-phosphate in D-glycero-D-manno-heptose 7-phosphate. In Buchnera aphidicola subsp. Acyrthosiphon pisum (strain 5A), this protein is Phosphoheptose isomerase.